A 290-amino-acid chain; its full sequence is Pantothenate synthetase (290 aa).

Residue 30–37 coordinates ATP; the sequence is MGALHEGH. His37 functions as the Proton donor in the catalytic mechanism. A (R)-pantoate-binding site is contributed by Gln61. Beta-alanine is bound at residue Gln61. 147 to 150 is a binding site for ATP; that stretch reads GEKD. Gln153 provides a ligand contact to (R)-pantoate. Residues Val176 and 184 to 187 contribute to the ATP site; that span reads KSSR.

This sequence belongs to the pantothenate synthetase family. As to quaternary structure, homodimer.

The protein localises to the cytoplasm. It carries out the reaction (R)-pantoate + beta-alanine + ATP = (R)-pantothenate + AMP + diphosphate + H(+). Its pathway is cofactor biosynthesis; (R)-pantothenate biosynthesis; (R)-pantothenate from (R)-pantoate and beta-alanine: step 1/1. In terms of biological role, catalyzes the condensation of pantoate with beta-alanine in an ATP-dependent reaction via a pantoyl-adenylate intermediate. The chain is Pantothenate synthetase from Chlorobium chlorochromatii (strain CaD3).